The chain runs to 219 residues: Small ribosomal subunit protein uS4 (219 aa).

The 63-residue stretch at 112 to 174 folds into the S4 RNA-binding domain; the sequence is RRLQTQVLRL…GSSPLMSESH (63 aa). Residues 193 to 219 form a disordered region; the sequence is KAAAEAKQARERPPERGGGRKKRGGRR. Residues 199-210 show a composition bias toward basic and acidic residues; that stretch reads KQARERPPERGG.

This sequence belongs to the universal ribosomal protein uS4 family. In terms of assembly, part of the 30S ribosomal subunit. Contacts protein S5. The interaction surface between S4 and S5 is involved in control of translational fidelity.

In terms of biological role, one of the primary rRNA binding proteins, it binds directly to 16S rRNA where it nucleates assembly of the body of the 30S subunit. Functionally, with S5 and S12 plays an important role in translational accuracy. The sequence is that of Small ribosomal subunit protein uS4 from Methanosarcina mazei (strain ATCC BAA-159 / DSM 3647 / Goe1 / Go1 / JCM 11833 / OCM 88) (Methanosarcina frisia).